Consider the following 205-residue polypeptide: Outer-membrane lipoprotein LolB (205 aa).

The N-terminal stretch at 1-17 (MFLRHCITFTLIALLAG) is a signal peptide. The N-palmitoyl cysteine moiety is linked to residue Cys-18. A lipid anchor (S-diacylglycerol cysteine) is attached at Cys-18.

Belongs to the LolB family. As to quaternary structure, monomer.

The protein resides in the cell outer membrane. Its function is as follows. Plays a critical role in the incorporation of lipoproteins in the outer membrane after they are released by the LolA protein. In Pseudomonas putida (strain GB-1), this protein is Outer-membrane lipoprotein LolB.